Consider the following 112-residue polypeptide: UPF0145 protein CD630_17110 (112 aa).

It belongs to the UPF0145 family.

The protein is UPF0145 protein CD630_17110 of Clostridioides difficile (strain 630) (Peptoclostridium difficile).